A 379-amino-acid polypeptide reads, in one-letter code: MNNTEYYERLGVDKNASQDEIKKAYRKMSKKYHPDLNKEEGAEDKYKEVQEAYETLSDEQKRAAYDQYGEAGRNGGFGGGGFGGASGFSGFGGRSGGFGGFEDIFSSFFGGGGAQVNPNAPRQGDDLQYRINLKFEEAIFGVEKQVKYNREELCHTCGGSGAKAGTHPETCHKCGGRGQINVVRDTPLGRMQTQTTCDVCHGTGKEIKEKSTTCHGSGHEKVAHTVKVTVPAGVETGQKMRLQGQGDAGVNGGPYGDLYVVFQVEASDKFERDGAEIYYKMPMDFVQAALGDEVEVPTVHGNVKLKIPAGTQTGANFRLKGKGAPKLRGSGNGDQYVIINIVTPKNMNQAQKEALQAFAKASGIEVSGSGQKGFFDKFK.

Positions 5–69 constitute a J domain; sequence EYYERLGVDK…QKRAAYDQYG (65 aa). A CR-type zinc finger spans residues 141 to 223; the sequence is GVEKQVKYNR…CHGSGHEKVA (83 aa). Residues Cys154, Cys157, Cys171, Cys174, Cys197, Cys200, and Cys214 each coordinate Zn(2+). CXXCXGXG motif repeat units lie at residues 154 to 161, 171 to 178, 197 to 204, and 211 to 218; these read CHTCGGSG, CHKCGGRG, CDVCHGTG, and STTCHGSG.

It belongs to the DnaJ family. As to quaternary structure, homodimer. The cofactor is Zn(2+).

The protein resides in the cytoplasm. In terms of biological role, participates actively in the response to hyperosmotic and heat shock by preventing the aggregation of stress-denatured proteins and by disaggregating proteins, also in an autonomous, DnaK-independent fashion. Unfolded proteins bind initially to DnaJ; upon interaction with the DnaJ-bound protein, DnaK hydrolyzes its bound ATP, resulting in the formation of a stable complex. GrpE releases ADP from DnaK; ATP binding to DnaK triggers the release of the substrate protein, thus completing the reaction cycle. Several rounds of ATP-dependent interactions between DnaJ, DnaK and GrpE are required for fully efficient folding. Also involved, together with DnaK and GrpE, in the DNA replication of plasmids through activation of initiation proteins. The chain is Chaperone protein DnaJ from Lactococcus lactis subsp. cremoris (Streptococcus cremoris).